Reading from the N-terminus, the 859-residue chain is Suppressor protein MPT5 (859 aa).

The segment at 85-108 (MNNTSTSNSANSFSPNPNAASNST) is disordered. Over residues 86 to 108 (NNTSTSNSANSFSPNPNAASNST) the composition is skewed to low complexity. The PUM-HD domain occupies 188–596 (DNSSFGLSSS…KIKLKVKAYA (409 aa)). Pumilio repeat units follow at residues 209–247 (PLRD…LMYE), 248–283 (QIKP…LLIQ), 284–320 (TIYP…LIIK), 325–362 (EFTS…FIID), 363–400 (AIVE…KISV), 401–438 (KIVQ…ELFN), 439–474 (RLSN…FIVN), and 503–539 (DIFT…AYNK). Positions 620–658 (TINNENKNPHNKNSHNHNHNHNHNHAHNNNNNNNQKSHT) are disordered. Positions 628-645 (PHNKNSHNHNHNHNHNHA) are enriched in basic residues. A phosphoserine mark is found at serine 662, serine 834, and serine 838.

The protein localises to the cytoplasm. RNA-binding protein involved in post-transcriptional regulation. Negatively regulates expression of HO by binding to the 3'-UTR of HO mRNA. Predominantly binds to mRNAs encoding chromatin modifiers and spindle pole body components. Recognizes and binds to 5'-TGTAA[CT]A[AT]TA-3' in the 3'-UTR of target mRNAs. Multicopy suppressor of POP2 mutation. Required for high temperature growth. The polypeptide is Suppressor protein MPT5 (MPT5) (Saccharomyces cerevisiae (strain ATCC 204508 / S288c) (Baker's yeast)).